A 172-amino-acid polypeptide reads, in one-letter code: Tail tube protein (172 aa).

Belongs to the P2likevirus major tail tube protein family.

It is found in the virion. Its function is as follows. Forms the virus tail tube. This chain is Tail tube protein (FII), found in Escherichia phage P2 (Bacteriophage P2).